We begin with the raw amino-acid sequence, 368 residues long: MRTLHVDLGERSYPIYIGENLLGDARWFAPHIVGRRVAVISNETVAPLYLETLLKALQGHEVTPVVLPDGEAYKQWETLQLIFDVLLKERHDRKTTLIALGGGVIGDMAGFAAACYQRGVNFIQVPTTLLSQVDSSVGGKTGINHPLGKNMIGAFYQPQAVVIDTASLKTLPSRELSAGLAEVIKYGFICDEPFITWLEAHMDALLALEPTVVTEAIERSCAAKARVVGADERESGVRATLNLGHTFGHAIETQQGYGVWLHGEAVGAGTVMALEMSHRLGWLSAAERDRGIRLLRRAGLPVVPPAEMTAEDFMEHMAVDKKVLDGRLRLVLLQGLGNAVVTGDFPREILDATLRTDYRALADQLGDE.

NAD(+)-binding positions include 69–74, 103–107, 127–128, K140, and K149; these read DGEAYK, GVIGD, and TT. Zn(2+) is bound by residues E182, H245, and H262.

It belongs to the sugar phosphate cyclases superfamily. Dehydroquinate synthase family. It depends on NAD(+) as a cofactor. Co(2+) is required as a cofactor. Requires Zn(2+) as cofactor.

It is found in the cytoplasm. It carries out the reaction 7-phospho-2-dehydro-3-deoxy-D-arabino-heptonate = 3-dehydroquinate + phosphate. It participates in metabolic intermediate biosynthesis; chorismate biosynthesis; chorismate from D-erythrose 4-phosphate and phosphoenolpyruvate: step 2/7. Functionally, catalyzes the conversion of 3-deoxy-D-arabino-heptulosonate 7-phosphate (DAHP) to dehydroquinate (DHQ). The chain is 3-dehydroquinate synthase from Pseudomonas aeruginosa (strain ATCC 15692 / DSM 22644 / CIP 104116 / JCM 14847 / LMG 12228 / 1C / PRS 101 / PAO1).